The sequence spans 101 residues: Small ribosomal subunit protein uS14 (101 aa).

This sequence belongs to the universal ribosomal protein uS14 family. As to quaternary structure, part of the 30S ribosomal subunit. Contacts proteins S3 and S10.

In terms of biological role, binds 16S rRNA, required for the assembly of 30S particles and may also be responsible for determining the conformation of the 16S rRNA at the A site. The chain is Small ribosomal subunit protein uS14 from Salmonella paratyphi A (strain ATCC 9150 / SARB42).